The primary structure comprises 276 residues: Nickel import system permease protein NikC (276 aa).

5 consecutive transmembrane segments (helical) span residues 10-30, 73-93, 108-128, 186-206, and 238-258; these read LIFF…FFVS, LFVT…LGLF, FIDV…ASFF, IIPA…LYIS, and IMLI…NLTG. Residues 69–258 form the ABC transmembrane type-1 domain; sequence ARSTLFVTVL…ITILIFNLTG (190 aa).

The protein belongs to the binding-protein-dependent transport system permease family. OppBC subfamily. As to quaternary structure, the complex is composed of two ATP-binding proteins (NikD and NikE), two transmembrane proteins (NikB and NikC) and a solute-binding protein (NikA).

The protein localises to the cell membrane. Part of the ABC transporter complex NikABCDE (Opp2) involved in nickel import. Probably responsible for the translocation of the substrate across the membrane. The sequence is that of Nickel import system permease protein NikC from Staphylococcus aureus (strain USA300).